Consider the following 130-residue polypeptide: Holo-[acyl-carrier-protein] synthase (130 aa).

Positions 8 and 62 each coordinate Mg(2+).

It belongs to the P-Pant transferase superfamily. AcpS family. Mg(2+) is required as a cofactor.

It localises to the cytoplasm. It carries out the reaction apo-[ACP] + CoA = holo-[ACP] + adenosine 3',5'-bisphosphate + H(+). Its function is as follows. Transfers the 4'-phosphopantetheine moiety from coenzyme A to a Ser of acyl-carrier-protein. This is Holo-[acyl-carrier-protein] synthase from Acidovorax ebreus (strain TPSY) (Diaphorobacter sp. (strain TPSY)).